Reading from the N-terminus, the 143-residue chain is Small ribosomal subunit protein bS18m (143 aa).

The protein belongs to the bacterial ribosomal protein bS18 family. Component of the mitochondrial ribosome small subunit (28S) which comprises a 12S rRNA and about 30 distinct proteins.

Its subcellular location is the mitochondrion. This is Small ribosomal subunit protein bS18m (MRPS18C) from Bos taurus (Bovine).